The primary structure comprises 340 residues: HTH-type transcriptional regulator CelR (340 aa).

In terms of domain architecture, HTH lacI-type spans 1–61; that stretch reads MERRRRPTLE…PNRAARTLVT (61 aa). The H-T-H motif DNA-binding region spans 9 to 28; sequence LEMVAALAGVGRGTVSRVIN.

It localises to the cytoplasm. With respect to regulation, activity is controlled by cytoplasmic cellobiose levels. Binding of CelR to the celE promoter is inhibited specifically by low concentrations of cellobiose, the major end product of cellulases. Activity may also be regulated through post-translational modification. In terms of biological role, transcriptional regulator that regulates the expression of all six cellulases, encoded by the cel genes (designated celA through celF). Acts as a repressor. Specifically binds to a 14-bp inverted repeat site, which is present in the upstream region of the cellulase genes. This chain is HTH-type transcriptional regulator CelR, found in Thermobifida fusca (Thermomonospora fusca).